Reading from the N-terminus, the 427-residue chain is Acyl-lipid 8-desaturase (427 aa).

Residues 1-24 (MGRGGDSSGQAHPAAELAVPSDRA) form a disordered region. The Cytochrome b5 heme-binding domain maps to 36–84 (IVLYGKRVDVTKFQRTHPGGSKVFRIFQDRDATEQFESYHSKRAIKMME). The heme site is built by His-52 and His-75. The Histidine box-1 signature appears at 178–182 (HSVFK). Residues 189-209 (VGWNNAAGYFLGFVQGYAVEW) form a helical membrane-spanning segment. Residues 213 to 218 (RHNTHH) carry the Histidine box-2 motif. The next 2 membrane-spanning stretches (helical) occupy residues 261-281 (VPVMAILDLYWRLESIAYVAM) and 286-306 (MLPQALALVAHYAIVAWVFAG). Positions 373–377 (QTEHH) match the Histidine box-3 motif.

Belongs to the fatty acid desaturase type 1 family. Fe(2+) serves as cofactor.

The protein resides in the membrane. Fatty acid desaturase that introduces a cis double bond at the 8-position in 20-carbon polyunsaturated fatty acids incorporated in a glycerolipid that contain a Delta(8) double bond to yield (20:4(8,11,14,17)). This Rebecca salina (Marine microalga) protein is Acyl-lipid 8-desaturase.